Reading from the N-terminus, the 486-residue chain is Cysteine--tRNA ligase (486 aa).

C29 lines the Zn(2+) pocket. Positions 31-41 match the 'HIGH' region motif; sequence VTVYDYCHLGH. Positions 214, 239, and 243 each coordinate Zn(2+). The short motif at 271–275 is the 'KMSKS' region element; it reads KMSKS. K274 serves as a coordination point for ATP.

The protein belongs to the class-I aminoacyl-tRNA synthetase family. Monomer. It depends on Zn(2+) as a cofactor.

It localises to the cytoplasm. The enzyme catalyses tRNA(Cys) + L-cysteine + ATP = L-cysteinyl-tRNA(Cys) + AMP + diphosphate. This Trichormus variabilis (strain ATCC 29413 / PCC 7937) (Anabaena variabilis) protein is Cysteine--tRNA ligase.